A 296-amino-acid chain; its full sequence is UDP-N-acetylglucosamine transporter TMEM241 homolog (296 aa).

Helical transmembrane passes span 7 to 29, 41 to 61, 67 to 87, 93 to 113, 126 to 146, 147 to 167, 187 to 207, 217 to 237, 248 to 266, and 272 to 291; these read AVGL…VLSV, WQTL…WLEI, SDVV…YAGS, LPIP…YGFQ, IFSI…DPQF, DADG…YKVF, VFSV…ISAL, FHSG…ASVK, ASWN…LIYF, and VPLT…LVYA.

The protein belongs to the nucleotide-sugar transporter family. SLC35A subfamily.

It is found in the golgi apparatus. The protein resides in the cis-Golgi network membrane. Its function is as follows. Golgi-localized UDP-N-acetylglucosamine (UDP-GlcNAc) transporter that transports UDP-N-acetylglucosamine into Golgi lumen. In Xenopus laevis (African clawed frog), this protein is UDP-N-acetylglucosamine transporter TMEM241 homolog (tmem241).